The chain runs to 671 residues: cGMP-dependent protein kinase 1 (671 aa).

Serine 2 carries the post-translational modification N-acetylserine. A coiled-coil region spans residues 2–59 (SELEEDFAKILMLKEERIKELEKRLSEKEEEIQELKRKLHKCQSVLPVPSTHIGPRTT). The segment at 2-102 (SELEEDFAKI…LIKEAILDND (101 aa)) is required for dimerization. Residues 9–44 (AKILMLKEERIKELEKRLSEKEEEIQELKRKLHKCQ) are leucine-zipper. An autoinhibitory domain region spans residues 50–75 (PSTHIGPRTTRAQGISAEPQTYRSFH). Threonine 59 is modified (phosphothreonine; by autocatalysis). The cGMP-binding, high affinity stretch occupies residues 103–220 (FMKNLELSQI…EYMEFLKSVP (118 aa)). Residues 167-170 (GELA) and 177-178 (RT) contribute to the 3',5'-cyclic AMP site. 3',5'-cyclic GMP-binding positions include 167-170 (GELA), 177-178 (RT), arginine 282, 291-294 (GEKA), 301-302 (RT), and tyrosine 336. Residues 221-341 (TFQSLPEEIL…SNKAYEDAEA (121 aa)) form a cGMP-binding, low affinity region. Residues 360-619 (FNIIDTLGVG…VKDIQKHKWF (260 aa)) enclose the Protein kinase domain. ATP contacts are provided by residues 366–374 (LGVGGFGRV) and lysine 390. Catalysis depends on aspartate 484, which acts as the Proton acceptor. Threonine 515 bears the Phosphothreonine mark. The 52-residue stretch at 620-671 (EGFNWEGLRKGTLTPPIIPSVASPTDTSNFDSFPEDNDEPPPDDNSGWDIDF) folds into the AGC-kinase C-terminal domain. Residues 635–671 (PIIPSVASPTDTSNFDSFPEDNDEPPPDDNSGWDIDF) are disordered. Acidic residues predominate over residues 652–661 (FPEDNDEPPP).

The protein belongs to the protein kinase superfamily. AGC Ser/Thr protein kinase family. cGMP subfamily. In terms of assembly, isoform alpha: parallel homodimer or heterodimer and also heterotetramer. Interacts directly with PPP1R12A. Non-covalent dimer of dimer of PRKG1-PRKG1 and PPP1R12A-PPP1R12A. This interaction targets PRKG1 to stress fibers to mediate smooth muscle cell relaxation and vasodilation in responses to rises in cGMP. Isoform beta: antiparallel homodimer. Part of cGMP kinase signaling complex at least composed of ACTA2/alpha-actin, CNN1/calponin H1, PLN/phospholamban, PRKG1 and ITPR1. Interacts with IRAG1. Forms a stable complex with ITPR1, IRAG1, and isoform beta of PRKG1. Interacts with TRPC7 (via ankyrin repeat domain). Isoform alpha interacts with RGS2. Interacts with GTF2I. Autophosphorylation increases kinase activity. Post-translationally, 65 kDa monomer is produced by proteolytic cleavage. In terms of tissue distribution, high concentrations are detected in various smooth muscle: lung, rumen, trachea, aorta, uterus and stomach. Isoform alpha is expressed predominantly in heart, cerebellum and lung, whereas the beta isoform is expressed in high concentrations in trachea, aorta, stomach and uterus.

The protein resides in the cytoplasm. It catalyses the reaction L-seryl-[protein] + ATP = O-phospho-L-seryl-[protein] + ADP + H(+). The catalysed reaction is L-threonyl-[protein] + ATP = O-phospho-L-threonyl-[protein] + ADP + H(+). Its activity is regulated as follows. In the absence of cGMP, PRKG1 activity is suppressed by autoinhibitory contacts. In terms of biological role, serine/threonine protein kinase that acts as a key mediator of the nitric oxide (NO)/cGMP signaling pathway. GMP binding activates PRKG1, which phosphorylates serines and threonines on many cellular proteins. Numerous protein targets for PRKG1 phosphorylation are implicated in modulating cellular calcium, but the contribution of each of these targets may vary substantially among cell types. Proteins that are phosphorylated by PRKG1 regulate platelet activation and adhesion, smooth muscle contraction, cardiac function, gene expression, feedback of the NO-signaling pathway, and other processes involved in several aspects of the CNS like axon guidance, hippocampal and cerebellar learning, circadian rhythm and nociception. Smooth muscle relaxation is mediated through lowering of intracellular free calcium, by desensitization of contractile proteins to calcium, and by decrease in the contractile state of smooth muscle or in platelet activation. Regulates intracellular calcium levels via several pathways: phosphorylates IRAG1 and inhibits IP3-induced Ca(2+) release from intracellular stores, phosphorylation of KCNMA1 (BKCa) channels decreases intracellular Ca(2+) levels, which leads to increased opening of this channel. PRKG1 phosphorylates the canonical transient receptor potential channel (TRPC) family which inactivates the associated inward calcium current. Another mode of action of NO/cGMP/PKGI signaling involves PKGI-mediated inactivation of the Ras homolog gene family member A (RhoA). Phosphorylation of RHOA by PRKG1 blocks the action of this protein in myriad processes: regulation of RHOA translocation; decreasing contraction; controlling vesicle trafficking, reduction of myosin light chain phosphorylation resulting in vasorelaxation. Activation of PRKG1 by NO signaling also alters gene expression in a number of tissues. In smooth muscle cells, increased cGMP and PRKG1 activity influence expression of smooth muscle-specific contractile proteins, levels of proteins in the NO/cGMP signaling pathway, down-regulation of the matrix proteins osteopontin and thrombospondin-1 to limit smooth muscle cell migration and phenotype. Regulates vasodilator-stimulated phosphoprotein (VASP) functions in platelets and smooth muscle. The chain is cGMP-dependent protein kinase 1 (PRKG1) from Bos taurus (Bovine).